A 485-amino-acid polypeptide reads, in one-letter code: Acetyl-coenzyme A carboxylase carboxyl transferase subunit beta, chloroplastic (485 aa).

The 268-residue stretch at 218–485 (LWIQCDNCYA…FFPLNKNEIK (268 aa)) folds into the CoA carboxyltransferase N-terminal domain. Zn(2+) is bound by residues cysteine 222, cysteine 225, cysteine 241, and cysteine 244. The C4-type zinc-finger motif lies at 222 to 244 (CDNCYALIYKKALKFKMNVCEQC).

It belongs to the AccD/PCCB family. As to quaternary structure, acetyl-CoA carboxylase is a heterohexamer composed of biotin carboxyl carrier protein, biotin carboxylase and 2 subunits each of ACCase subunit alpha and ACCase plastid-coded subunit beta (accD). Requires Zn(2+) as cofactor.

The protein resides in the plastid. The protein localises to the chloroplast stroma. The catalysed reaction is N(6)-carboxybiotinyl-L-lysyl-[protein] + acetyl-CoA = N(6)-biotinyl-L-lysyl-[protein] + malonyl-CoA. Its pathway is lipid metabolism; malonyl-CoA biosynthesis; malonyl-CoA from acetyl-CoA: step 1/1. Component of the acetyl coenzyme A carboxylase (ACC) complex. Biotin carboxylase (BC) catalyzes the carboxylation of biotin on its carrier protein (BCCP) and then the CO(2) group is transferred by the transcarboxylase to acetyl-CoA to form malonyl-CoA. This chain is Acetyl-coenzyme A carboxylase carboxyl transferase subunit beta, chloroplastic, found in Aethionema cordifolium (Lebanon stonecress).